A 218-amino-acid chain; its full sequence is N-(5'-phosphoribosyl)anthranilate isomerase (218 aa).

Belongs to the TrpF family.

The enzyme catalyses N-(5-phospho-beta-D-ribosyl)anthranilate = 1-(2-carboxyphenylamino)-1-deoxy-D-ribulose 5-phosphate. It functions in the pathway amino-acid biosynthesis; L-tryptophan biosynthesis; L-tryptophan from chorismate: step 3/5. The sequence is that of N-(5'-phosphoribosyl)anthranilate isomerase from Bordetella pertussis (strain Tohama I / ATCC BAA-589 / NCTC 13251).